The following is a 344-amino-acid chain: Holliday junction branch migration complex subunit RuvB (344 aa).

The tract at residues 1–182 (MRIEALNTAP…FGINSRLDYY (182 aa)) is large ATPase domain (RuvB-L). Residues Ile-21, Arg-22, Gly-63, Lys-66, Thr-67, Thr-68, 129 to 131 (EDY), Arg-172, Tyr-182, and Arg-219 each bind ATP. Thr-67 serves as a coordination point for Mg(2+). A small ATPAse domain (RuvB-S) region spans residues 183–253 (NPELLQSIII…VARRTLESLE (71 aa)). Residues 256–344 (EGGLDDMDKK…GSLFDTAEDG (89 aa)) form a head domain (RuvB-H) region. DNA-binding residues include Arg-311 and Arg-316.

Belongs to the RuvB family. Homohexamer. Forms an RuvA(8)-RuvB(12)-Holliday junction (HJ) complex. HJ DNA is sandwiched between 2 RuvA tetramers; dsDNA enters through RuvA and exits via RuvB. An RuvB hexamer assembles on each DNA strand where it exits the tetramer. Each RuvB hexamer is contacted by two RuvA subunits (via domain III) on 2 adjacent RuvB subunits; this complex drives branch migration. In the full resolvosome a probable DNA-RuvA(4)-RuvB(12)-RuvC(2) complex forms which resolves the HJ.

It localises to the cytoplasm. The catalysed reaction is ATP + H2O = ADP + phosphate + H(+). Functionally, the RuvA-RuvB-RuvC complex processes Holliday junction (HJ) DNA during genetic recombination and DNA repair, while the RuvA-RuvB complex plays an important role in the rescue of blocked DNA replication forks via replication fork reversal (RFR). RuvA specifically binds to HJ cruciform DNA, conferring on it an open structure. The RuvB hexamer acts as an ATP-dependent pump, pulling dsDNA into and through the RuvAB complex. RuvB forms 2 homohexamers on either side of HJ DNA bound by 1 or 2 RuvA tetramers; 4 subunits per hexamer contact DNA at a time. Coordinated motions by a converter formed by DNA-disengaged RuvB subunits stimulates ATP hydrolysis and nucleotide exchange. Immobilization of the converter enables RuvB to convert the ATP-contained energy into a lever motion, pulling 2 nucleotides of DNA out of the RuvA tetramer per ATP hydrolyzed, thus driving DNA branch migration. The RuvB motors rotate together with the DNA substrate, which together with the progressing nucleotide cycle form the mechanistic basis for DNA recombination by continuous HJ branch migration. Branch migration allows RuvC to scan DNA until it finds its consensus sequence, where it cleaves and resolves cruciform DNA. The protein is Holliday junction branch migration complex subunit RuvB of Chlorobaculum tepidum (strain ATCC 49652 / DSM 12025 / NBRC 103806 / TLS) (Chlorobium tepidum).